The following is a 145-amino-acid chain: Small ribosomal subunit protein uS15 (145 aa).

This sequence belongs to the universal ribosomal protein uS15 family. As to quaternary structure, part of the 30S ribosomal subunit.

The protein is Small ribosomal subunit protein uS15 of Thermoplasma acidophilum (strain ATCC 25905 / DSM 1728 / JCM 9062 / NBRC 15155 / AMRC-C165).